The following is a 445-amino-acid chain: Methylenetetrahydrofolate--tRNA-(uracil-5-)-methyltransferase TrmFO (445 aa).

Position 10–15 (10–15 (GGGLSG)) interacts with FAD.

It belongs to the MnmG family. TrmFO subfamily. It depends on FAD as a cofactor.

The protein localises to the cytoplasm. It carries out the reaction uridine(54) in tRNA + (6R)-5,10-methylene-5,6,7,8-tetrahydrofolate + NADH + H(+) = 5-methyluridine(54) in tRNA + (6S)-5,6,7,8-tetrahydrofolate + NAD(+). The catalysed reaction is uridine(54) in tRNA + (6R)-5,10-methylene-5,6,7,8-tetrahydrofolate + NADPH + H(+) = 5-methyluridine(54) in tRNA + (6S)-5,6,7,8-tetrahydrofolate + NADP(+). Functionally, catalyzes the folate-dependent formation of 5-methyl-uridine at position 54 (M-5-U54) in all tRNAs. In Lawsonia intracellularis (strain PHE/MN1-00), this protein is Methylenetetrahydrofolate--tRNA-(uracil-5-)-methyltransferase TrmFO.